The sequence spans 383 residues: S-adenosylmethionine synthase (383 aa).

His-15 provides a ligand contact to ATP. Asp-17 is a binding site for Mg(2+). Glu-43 is a K(+) binding site. Residues Glu-56 and Gln-99 each coordinate L-methionine. Residues 99–109 form a flexible loop region; sequence QSPDINQGVDR. ATP-binding positions include 164–166, 230–231, Asp-239, 245–246, Ala-262, and Lys-266; these read DAK, RF, and RK. L-methionine is bound at residue Asp-239. Lys-270 lines the L-methionine pocket.

The protein belongs to the AdoMet synthase family. Homotetramer; dimer of dimers. Requires Mg(2+) as cofactor. K(+) is required as a cofactor.

Its subcellular location is the cytoplasm. The catalysed reaction is L-methionine + ATP + H2O = S-adenosyl-L-methionine + phosphate + diphosphate. The protein operates within amino-acid biosynthesis; S-adenosyl-L-methionine biosynthesis; S-adenosyl-L-methionine from L-methionine: step 1/1. Catalyzes the formation of S-adenosylmethionine (AdoMet) from methionine and ATP. The overall synthetic reaction is composed of two sequential steps, AdoMet formation and the subsequent tripolyphosphate hydrolysis which occurs prior to release of AdoMet from the enzyme. The chain is S-adenosylmethionine synthase from Shewanella denitrificans (strain OS217 / ATCC BAA-1090 / DSM 15013).